A 213-amino-acid polypeptide reads, in one-letter code: Large ribosomal subunit protein uL23 (213 aa).

The large ribosomal subunit protein uL23 stretch occupies residues 1–117; the sequence is MNHNEIIKYP…KSTSELKLEE (117 aa). A unknown region spans residues 118–213; that stretch reads KIAAKIAAKE…TTKKTTTKKV (96 aa).

This sequence belongs to the universal ribosomal protein uL23 family. Part of the 50S ribosomal subunit. Contacts protein L29, and trigger factor when it is bound to the ribosome.

Its function is as follows. One of the early assembly proteins it binds 23S rRNA. One of the proteins that surrounds the polypeptide exit tunnel on the outside of the ribosome. Forms the main docking site for trigger factor binding to the ribosome. The polypeptide is Large ribosomal subunit protein uL23 (Mycoplasma mobile (strain ATCC 43663 / 163K / NCTC 11711) (Mesomycoplasma mobile)).